A 381-amino-acid chain; its full sequence is Probable peptidoglycan glycosyltransferase FtsW (381 aa).

A run of 9 helical transmembrane segments spans residues 16-36 (LVLLLMVVALTSFGIVMVYSA), 56-76 (LIFALVGCVGALVTMRIDYQL), 80-100 (WAVPLLFVSLILLVLVLIPGI), 145-165 (LLSAGFLPYMVVLMILLGLLL), 168-188 (PDMGAALTLAAVTIIMLFAAG), 191-211 (LIFILGSGMVAMPFVVYLVVH), 274-294 (VIGEELGFIGVIVIIGMFFIL), 312-332 (FLALGIAVLFAIEAVVNMAVV), and 343-363 (LPFLSYGGSSLLISLFAVGIL).

Belongs to the SEDS family. FtsW subfamily.

The protein resides in the cell inner membrane. The catalysed reaction is [GlcNAc-(1-&gt;4)-Mur2Ac(oyl-L-Ala-gamma-D-Glu-L-Lys-D-Ala-D-Ala)](n)-di-trans,octa-cis-undecaprenyl diphosphate + beta-D-GlcNAc-(1-&gt;4)-Mur2Ac(oyl-L-Ala-gamma-D-Glu-L-Lys-D-Ala-D-Ala)-di-trans,octa-cis-undecaprenyl diphosphate = [GlcNAc-(1-&gt;4)-Mur2Ac(oyl-L-Ala-gamma-D-Glu-L-Lys-D-Ala-D-Ala)](n+1)-di-trans,octa-cis-undecaprenyl diphosphate + di-trans,octa-cis-undecaprenyl diphosphate + H(+). The protein operates within cell wall biogenesis; peptidoglycan biosynthesis. In terms of biological role, peptidoglycan polymerase that is essential for cell division. The chain is Probable peptidoglycan glycosyltransferase FtsW from Trichlorobacter lovleyi (strain ATCC BAA-1151 / DSM 17278 / SZ) (Geobacter lovleyi).